The sequence spans 638 residues: 1-deoxy-D-xylulose-5-phosphate synthase (638 aa).

Residues His-72 and 113-115 each bind thiamine diphosphate; that span reads GHA. Asp-144 is a Mg(2+) binding site. Thiamine diphosphate is bound by residues 145-146, Asn-174, Tyr-289, and Glu-372; that span reads GA. Asn-174 lines the Mg(2+) pocket.

Belongs to the transketolase family. DXPS subfamily. In terms of assembly, homodimer. Mg(2+) is required as a cofactor. Thiamine diphosphate serves as cofactor.

The enzyme catalyses D-glyceraldehyde 3-phosphate + pyruvate + H(+) = 1-deoxy-D-xylulose 5-phosphate + CO2. Its pathway is metabolic intermediate biosynthesis; 1-deoxy-D-xylulose 5-phosphate biosynthesis; 1-deoxy-D-xylulose 5-phosphate from D-glyceraldehyde 3-phosphate and pyruvate: step 1/1. In terms of biological role, catalyzes the acyloin condensation reaction between C atoms 2 and 3 of pyruvate and glyceraldehyde 3-phosphate to yield 1-deoxy-D-xylulose-5-phosphate (DXP). This is 1-deoxy-D-xylulose-5-phosphate synthase from Gloeobacter violaceus (strain ATCC 29082 / PCC 7421).